Here is a 459-residue protein sequence, read N- to C-terminus: Xylose/arabinose-binding protein XacG (459 aa).

A helical transmembrane segment spans residues 19–36; it reads ALTVGAAAGIAGCTGGGG. Residues 27–68 form a disordered region; it reads GIAGCTGGGGTETESTESGNGNGSGGSTDDTETSGSSSGESW.

Belongs to the bacterial solute-binding protein 1 family. The complex is composed of two ATP-binding proteins (XacJ and XacK), two transmembrane proteins (XacH and XacI) and a solute-binding protein (XacG).

The protein resides in the cell membrane. Part of the ABC transporter complex XacGHIJK involved in the uptake of xylose and arabinose. The chain is Xylose/arabinose-binding protein XacG from Haloferax volcanii (strain ATCC 29605 / DSM 3757 / JCM 8879 / NBRC 14742 / NCIMB 2012 / VKM B-1768 / DS2) (Halobacterium volcanii).